A 597-amino-acid polypeptide reads, in one-letter code: Elongation factor 4 (597 aa).

The tr-type G domain occupies 2 to 184 (KNIRNFSIIA…EIVHKIPAPE (183 aa)). Residues 14–19 (DHGKST) and 131–134 (NKID) each bind GTP.

The protein belongs to the TRAFAC class translation factor GTPase superfamily. Classic translation factor GTPase family. LepA subfamily.

The protein localises to the cell inner membrane. The enzyme catalyses GTP + H2O = GDP + phosphate + H(+). In terms of biological role, required for accurate and efficient protein synthesis under certain stress conditions. May act as a fidelity factor of the translation reaction, by catalyzing a one-codon backward translocation of tRNAs on improperly translocated ribosomes. Back-translocation proceeds from a post-translocation (POST) complex to a pre-translocation (PRE) complex, thus giving elongation factor G a second chance to translocate the tRNAs correctly. Binds to ribosomes in a GTP-dependent manner. This Actinobacillus succinogenes (strain ATCC 55618 / DSM 22257 / CCUG 43843 / 130Z) protein is Elongation factor 4.